Consider the following 412-residue polypeptide: Glucose-1-phosphate adenylyltransferase (412 aa).

Alpha-D-glucose 1-phosphate-binding positions include Gly163, 179-180, and Ser197; that span reads EK.

It belongs to the bacterial/plant glucose-1-phosphate adenylyltransferase family. In terms of assembly, homotetramer.

The enzyme catalyses alpha-D-glucose 1-phosphate + ATP + H(+) = ADP-alpha-D-glucose + diphosphate. It functions in the pathway glycan biosynthesis; glycogen biosynthesis. Its function is as follows. Involved in the biosynthesis of ADP-glucose, a building block required for the elongation reactions to produce glycogen. Catalyzes the reaction between ATP and alpha-D-glucose 1-phosphate (G1P) to produce pyrophosphate and ADP-Glc. This chain is Glucose-1-phosphate adenylyltransferase, found in Frankia casuarinae (strain DSM 45818 / CECT 9043 / HFP020203 / CcI3).